A 380-amino-acid polypeptide reads, in one-letter code: Chaperone protein DnaJ (380 aa).

The J domain maps to 4-68 (DFYSVLGVSR…EKRRMYDQMG (65 aa)). Basic and acidic residues predominate over residues 27 to 87 (KASEYHPDVS…RGATDTDRGR (61 aa)). The tract at residues 27–126 (KASEYHPDVS…SRSGPRQGSD (100 aa)) is disordered. The segment covering 88-100 (GGMGGMGGGGMGG) has biased composition (gly residues). The segment covering 115-124 (SQSRSGPRQG) has biased composition (low complexity). The CR-type zinc finger occupies 141 to 223 (GVTKQLTVTR…CRGDGQVRNE (83 aa)). Residues cysteine 154, cysteine 157, cysteine 171, cysteine 174, cysteine 197, cysteine 200, cysteine 211, and cysteine 214 each coordinate Zn(2+). CXXCXGXG motif repeat units lie at residues 154 to 161 (CPDCDGAG), 171 to 178 (CSACDGRG), 197 to 204 (CPQCDGKG), and 211 to 218 (CSTCRGDG).

It belongs to the DnaJ family. Homodimer. Zn(2+) is required as a cofactor.

The protein localises to the cytoplasm. Participates actively in the response to hyperosmotic and heat shock by preventing the aggregation of stress-denatured proteins and by disaggregating proteins, also in an autonomous, DnaK-independent fashion. Unfolded proteins bind initially to DnaJ; upon interaction with the DnaJ-bound protein, DnaK hydrolyzes its bound ATP, resulting in the formation of a stable complex. GrpE releases ADP from DnaK; ATP binding to DnaK triggers the release of the substrate protein, thus completing the reaction cycle. Several rounds of ATP-dependent interactions between DnaJ, DnaK and GrpE are required for fully efficient folding. Also involved, together with DnaK and GrpE, in the DNA replication of plasmids through activation of initiation proteins. In Natronomonas pharaonis (strain ATCC 35678 / DSM 2160 / CIP 103997 / JCM 8858 / NBRC 14720 / NCIMB 2260 / Gabara) (Halobacterium pharaonis), this protein is Chaperone protein DnaJ.